Here is a 22-residue protein sequence, read N- to C-terminus: RGCCNGRGGCSSRWCRDHARCC.

Intrachain disulfides connect cysteine 3–cysteine 15, cysteine 4–cysteine 21, and cysteine 10–cysteine 22. Residue cysteine 22 is modified to Cysteine amide.

Belongs to the conotoxin M superfamily. In terms of tissue distribution, expressed by the venom duct.

Its subcellular location is the secreted. Functionally, mu-conotoxins block voltage-gated sodium channels (Nav). This toxin potently inhibits hNav1.4/SCN4A (IC(50)=15.11 nM). It also displays lower activities on other human subtypes (Nav1.1/SCN1A; IC(50)=132 nM, Nav1.2/SCN2A; IC(50)=363.8, Nav1.3/SCN3A; IC(50)=89.4, Nav1.6/SCN3A; IC(50)=124.9, Nav1.7/SCN7A; IC(50)=152.2). At Nav1.7/SCN9A, it does not elicit change in channel voltage-dependence of fast inactivation or activation, suggesting it acts as a pore blocker. Interestingly, it blocks current inhibition in an irreversible manner (tested during 35 minutes). The polypeptide is Mu-conotoxin SxIIIC (Conus striolatus (Cone snail)).